Reading from the N-terminus, the 84-residue chain is Toxin Cex12 (84 aa).

The signal sequence occupies residues 1–19 (MNSLLMITTCLILVGTVWA). The LCN-type CS-alpha/beta domain occupies 20–83 (NDGYLFDKRK…ISRTPGKTCR (64 aa)). 4 disulfide bridges follow: Cys-31-Cys-82, Cys-35-Cys-58, Cys-44-Cys-63, and Cys-48-Cys-65.

The protein belongs to the long (4 C-C) scorpion toxin superfamily. Sodium channel inhibitor family. Beta subfamily. As to expression, expressed by the venom gland.

The protein resides in the secreted. Functionally, beta toxins bind voltage-independently at site-4 of sodium channels (Nav) and shift the voltage of activation toward more negative potentials thereby affecting sodium channel activation and promoting spontaneous and repetitive firing. This is Toxin Cex12 from Centruroides exilicauda (Bark scorpion).